The following is a 240-amino-acid chain: Histidinol dehydrogenase homolog oryD (240 aa).

Residues Gln-64 and His-67 each contribute to the Zn(2+) site. Catalysis depends on Glu-134, which acts as the Proton acceptor. Zn(2+) is bound by residues Asp-168 and His-228.

The protein belongs to the histidinol dehydrogenase family. It depends on Zn(2+) as a cofactor.

It participates in secondary metabolite biosynthesis. Histidinol dehydrogenase homolog; part of the gene cluster that mediates the biosynthesis of oryzines, natural products with an unusual maleidride backbone. The two subunits of the fungal fatty acid synthase oryfasA and oryfasB probably form octenoic acid. This fatty acid is most likely activated by the acyl-CoA ligase oryP to give octenyl-CoA before the citrate synthase-like protein oryE catalyzes condensation with oxaloacetate to form tricarboxylic acid. The next steps of the pathways are conjectural, but a favorite possible route has been proposed, beginning with decarboxylation and concomitant dehydration by the decarboxylase oryM, followed by tautomerization, which may lead to the production of a diene intermediate. Reduction of this diene intermediate could give the known metabolite piliformic acid. On the pathway to oryzine B and oryzine A, however, hydroxylation of the diene by the alpha-ketoglutarate-dependent dioxygenase oryG and lactonisation by the lactonohydrolases oryH or oryL could give oryzine B directly. Finally, enoyl reduction by the dehydrogenase oryD would then convert oryzine B into oryzine A. This Aspergillus oryzae (strain ATCC 42149 / RIB 40) (Yellow koji mold) protein is Histidinol dehydrogenase homolog oryD.